The chain runs to 171 residues: MPLLDSFAVDHTRMQAPAVRVAKTMNTPHGDAITVFDLRFCIPNKEVMPEKGIHTLEHLFAGFMRDHLNGNGVEIIDISPMGCRTGFYMSLIGTPDEQRVADAWKAAMADVLKVQDQNQIPELNVYQCGTYQMHSLSEAQDIARHILERDVRVNSNKELALPKEKLQELHI.

Residues His-54, His-58, and Cys-128 each contribute to the Fe cation site.

The protein belongs to the LuxS family. In terms of assembly, homodimer. Requires Fe cation as cofactor.

It carries out the reaction S-(5-deoxy-D-ribos-5-yl)-L-homocysteine = (S)-4,5-dihydroxypentane-2,3-dione + L-homocysteine. Involved in the synthesis of autoinducer 2 (AI-2) which is secreted by bacteria and is used to communicate both the cell density and the metabolic potential of the environment. The regulation of gene expression in response to changes in cell density is called quorum sensing. Catalyzes the transformation of S-ribosylhomocysteine (RHC) to homocysteine (HC) and 4,5-dihydroxy-2,3-pentadione (DPD). The chain is S-ribosylhomocysteine lyase from Salmonella agona (strain SL483).